The chain runs to 141 residues: Mite group 2 allergen Lep d 2 (141 aa).

The N-terminal stretch at 1–16 is a signal peptide; that stretch reads MMKFIALFALVAVASA. 3 cysteine pairs are disulfide-bonded: Cys24/Cys133, Cys37/Cys42, and Cys88/Cys93. Repeat copies occupy residues 64–65, 68–69, and 72–73. The interval 64–73 is 3 X 2 AA repeats of K-V; that stretch reads KVTIKVLAKV.

Belongs to the NPC2 family. Monomer.

It is found in the secreted. The polypeptide is Mite group 2 allergen Lep d 2 (Lepidoglyphus destructor (Storage mite)).